We begin with the raw amino-acid sequence, 556 residues long: Insulin-like growth factor 2 mRNA-binding protein 2 (556 aa).

RRM domains are found at residues 3–76 (NKLY…YSVS) and 82–157 (RKIQ…YIPD). Ser-11 carries the post-translational modification Phosphoserine. A disordered region spans residues 156–188 (PDEEVSSPSPPQRAQRGDHSSREQGHAPGGTSQ). Ser-162 and Ser-164 each carry phosphoserine. Residues 170–180 (QRGDHSSREQG) are compositionally biased toward basic and acidic residues. 4 KH domains span residues 193 to 258 (DFPL…CRMI), 274 to 341 (EIPL…EIEI), 384 to 449 (QEIV…QGRI), and 466 to 532 (KLEA…QRKI). The residue at position 507 (Thr-507) is a Phosphothreonine.

The protein belongs to the RRM IMP/VICKZ family. Can form homooligomers and heterooligomers with IGF2BP1 and IGF2BP3 in an RNA-dependent manner. Interacts with HNRPD. Interacts with IGF2BP1. Interacts with ELAVL1, DHX9, HNRNPU, MATR3 and PABPC1.

Its subcellular location is the nucleus. The protein localises to the cytoplasm. It localises to the P-body. The protein resides in the stress granule. Its function is as follows. RNA-binding factor that recruits target transcripts to cytoplasmic protein-RNA complexes (mRNPs). This transcript 'caging' into mRNPs allows mRNA transport and transient storage. It also modulates the rate and location at which target transcripts encounter the translational apparatus and shields them from endonuclease attacks or microRNA-mediated degradation. Preferentially binds to N6-methyladenosine (m6A)-containing mRNAs and increases their stability. Binds to the 5'-UTR of the insulin-like growth factor 2 (IGF2) mRNAs. Binding is isoform-specific. Binds to beta-actin/ACTB and MYC transcripts. Increases MYC mRNA stability by binding to the coding region instability determinant (CRD) and binding is enhanced by m6A-modification of the CRD. The chain is Insulin-like growth factor 2 mRNA-binding protein 2 (IGF2BP2) from Pongo abelii (Sumatran orangutan).